Here is a 768-residue protein sequence, read N- to C-terminus: Cullin-3-B (768 aa).

Positions 677–698 are disordered; that stretch reads VAAKQGESDPERKETRQKVDDD. Positions 682–698 are enriched in basic and acidic residues; sequence GESDPERKETRQKVDDD. In terms of domain architecture, Cullin neddylation spans 698-760; that stretch reads DRKHEIEAAI…REYLARTPED (63 aa). Residue Lys-712 forms a Glycyl lysine isopeptide (Lys-Gly) (interchain with G-Cter in NEDD8) linkage.

It belongs to the cullin family. In terms of assembly, component of multiple BCR (BTB-CUL3-RBX1) E3 ubiquitin-protein ligase complexes formed of cul3, rbx1 and a variable BTB domain-containing protein acting as both, adapter to cullin and substrate recognition subunit. Interacts with btbd6. Post-translationally, neddylated. Attachment of NEDD8 is required for the E3 ubiquitin-protein ligase activity of the SCF-like complex.

It is found in the nucleus. It participates in protein modification; protein ubiquitination. Probable core component of cullin-based SCF-like E3 ubiquitin-protein ligase complexes which mediate the ubiquitination and subsequent proteasomal degradation of target proteins. The E3 ubiquitin-protein ligase activity of the complex is dependent on the neddylation of the cullin subunit. Involved in ER-Golgi transport by regulating the size of COPII coats, thereby playing a key role in collagen export, which is required for embryonic stem (ES) cells division. May play a role in the regulation of mittotic entry via ubiquitination of aurka. This is Cullin-3-B (cul3b) from Xenopus laevis (African clawed frog).